The primary structure comprises 217 residues: 3,4-dihydroxy-2-butanone 4-phosphate synthase (217 aa).

D-ribulose 5-phosphate contacts are provided by residues 37–38 (RE), Asp-42, 150–154 (RGGHT), and Glu-174. Glu-38 is a Mg(2+) binding site. Mg(2+) is bound at residue His-153.

Belongs to the DHBP synthase family. Homodimer. It depends on Mg(2+) as a cofactor. The cofactor is Mn(2+).

The enzyme catalyses D-ribulose 5-phosphate = (2S)-2-hydroxy-3-oxobutyl phosphate + formate + H(+). Its pathway is cofactor biosynthesis; riboflavin biosynthesis; 2-hydroxy-3-oxobutyl phosphate from D-ribulose 5-phosphate: step 1/1. Functionally, catalyzes the conversion of D-ribulose 5-phosphate to formate and 3,4-dihydroxy-2-butanone 4-phosphate. This Klebsiella pneumoniae subsp. pneumoniae (strain ATCC 700721 / MGH 78578) protein is 3,4-dihydroxy-2-butanone 4-phosphate synthase.